The primary structure comprises 245 residues: tRNA1(Val) (adenine(37)-N6)-methyltransferase (245 aa).

It belongs to the methyltransferase superfamily. tRNA (adenine-N(6)-)-methyltransferase family.

Its subcellular location is the cytoplasm. The enzyme catalyses adenosine(37) in tRNA1(Val) + S-adenosyl-L-methionine = N(6)-methyladenosine(37) in tRNA1(Val) + S-adenosyl-L-homocysteine + H(+). In terms of biological role, specifically methylates the adenine in position 37 of tRNA(1)(Val) (anticodon cmo5UAC). The polypeptide is tRNA1(Val) (adenine(37)-N6)-methyltransferase (Salmonella paratyphi A (strain ATCC 9150 / SARB42)).